Reading from the N-terminus, the 189-residue chain is MIVILNNGGQYVHRIQRSLKYIGVPAKIVLNSTNLEEIEKNPEIKGIILSGGPDITKATNCENIALNSKLPVLGICLGHQLISKAYGGKVKRAESEEYASIKIHVKYENDIFKNVPNEFTAWASHMDEVKEIPDCLEVLAFSEICGVEAFKHKEKLVYGVQFHPEVSHTEHGELILKNFCKVCGFKFNE.

One can recognise a Glutamine amidotransferase type-1 domain in the interval 1–189 (MIVILNNGGQ…CKVCGFKFNE (189 aa)). Cysteine 76 functions as the Nucleophile in the catalytic mechanism. Residues histidine 163 and glutamate 165 contribute to the active site.

As to quaternary structure, heterodimer composed of a glutamine amidotransferase subunit (A) and a GMP-binding subunit (B).

It catalyses the reaction XMP + L-glutamine + ATP + H2O = GMP + L-glutamate + AMP + diphosphate + 2 H(+). It functions in the pathway purine metabolism; GMP biosynthesis; GMP from XMP (L-Gln route): step 1/1. In terms of biological role, catalyzes the synthesis of GMP from XMP. The protein is GMP synthase [glutamine-hydrolyzing] subunit A of Methanococcus vannielii (strain ATCC 35089 / DSM 1224 / JCM 13029 / OCM 148 / SB).